The sequence spans 74 residues: Chitinases 70, 30, and 20.5 kDa (74 aa).

The interval X1 to T27 is N-terminus of 70 kDa chitinase. The tract at residues A28–D52 is N-terminus of 30 kDa chitinase. Residues X53 to C74 form an N-terminus of 20.5 kDa chitinase region.

This sequence belongs to the glycosyl hydrolase 18 family. Chitinase class II subfamily. In terms of assembly, homodimer, but homotrimers and homotetramers could be observed for the 20.5 and 30 kDa chitinases. In terms of processing, the 70 kDa chitinase is probably the precursor protein of the 30 and 20.5 kDa chitinases.

It catalyses the reaction Random endo-hydrolysis of N-acetyl-beta-D-glucosaminide (1-&gt;4)-beta-linkages in chitin and chitodextrins.. In terms of biological role, able to cleave chitin oligomers from N=3 to 6. The sequence is that of Chitinases 70, 30, and 20.5 kDa from Streptomyces olivaceoviridis (Streptomyces corchorusii).